The sequence spans 215 residues: Fanconi anemia core complex-associated protein 24 (215 aa).

The interval 160–215 (LRTVQQIPGVGKVKAPLLLQKFPSIQQLSNASIGELEQVVGQAVAQQIHAFFTQPR) is ruvA domain 2-like.

As to quaternary structure, belongs to the multisubunit FA complex composed of FANCA, FANCB, FANCC, FANCE, FANCF, FANCG, FANCL/PHF9, FANCM and FAAP24. Interacts with FANCM.

It is found in the nucleus. In terms of biological role, plays a role in DNA repair through recruitment of the FA core complex to damaged DNA. Regulates FANCD2 monoubiquitination upon DNA damage. Induces chromosomal instability as well as hypersensitivity to DNA cross-linking agents, when repressed. Targets FANCM/FAAP24 complex to the DNA, preferentially to single strand DNA. The chain is Fanconi anemia core complex-associated protein 24 from Homo sapiens (Human).